A 94-amino-acid polypeptide reads, in one-letter code: Co-chaperonin GroES (94 aa).

It belongs to the GroES chaperonin family. Heptamer of 7 subunits arranged in a ring. Interacts with the chaperonin GroEL.

The protein localises to the cytoplasm. Functionally, together with the chaperonin GroEL, plays an essential role in assisting protein folding. The GroEL-GroES system forms a nano-cage that allows encapsulation of the non-native substrate proteins and provides a physical environment optimized to promote and accelerate protein folding. GroES binds to the apical surface of the GroEL ring, thereby capping the opening of the GroEL channel. In Clostridioides difficile (Peptoclostridium difficile), this protein is Co-chaperonin GroES.